The sequence spans 250 residues: 4-hydroxy-tetrahydrodipicolinate reductase (250 aa).

Residues 9 to 14 (GATGKM), 79 to 81 (GTT), and 103 to 106 (SANM) each bind NAD(+). Catalysis depends on H135, which acts as the Proton donor/acceptor. H136 contributes to the (S)-2,3,4,5-tetrahydrodipicolinate binding site. Residue K139 is the Proton donor of the active site. 145–146 (GT) provides a ligand contact to (S)-2,3,4,5-tetrahydrodipicolinate.

Belongs to the DapB family.

The protein localises to the cytoplasm. It catalyses the reaction (S)-2,3,4,5-tetrahydrodipicolinate + NAD(+) + H2O = (2S,4S)-4-hydroxy-2,3,4,5-tetrahydrodipicolinate + NADH + H(+). The enzyme catalyses (S)-2,3,4,5-tetrahydrodipicolinate + NADP(+) + H2O = (2S,4S)-4-hydroxy-2,3,4,5-tetrahydrodipicolinate + NADPH + H(+). Its pathway is amino-acid biosynthesis; L-lysine biosynthesis via DAP pathway; (S)-tetrahydrodipicolinate from L-aspartate: step 4/4. Catalyzes the conversion of 4-hydroxy-tetrahydrodipicolinate (HTPA) to tetrahydrodipicolinate. This chain is 4-hydroxy-tetrahydrodipicolinate reductase, found in Rickettsia bellii (strain OSU 85-389).